The following is a 117-amino-acid chain: Cuticular protein 47Eg (117 aa).

The signal sequence occupies residues 1 to 16; the sequence is MKFFIAFACLLAVALA. Positions 31 to 97 constitute a Chitin-binding type R&amp;R domain; the sequence is VDGFAYAVEL…SANPPLPTPP (67 aa).

Its function is as follows. Component of the larval cuticle. This chain is Cuticular protein 47Eg (Cpr47Eg), found in Drosophila melanogaster (Fruit fly).